The sequence spans 237 residues: Ras-related protein Rab-23 (237 aa).

Position 19 (alanine 19) interacts with GDP. Residues valine 20, glycine 21, lysine 22, serine 23, and serine 24 each contribute to the GTP site. Residues glycine 21, lysine 22, serine 23, serine 24, and aspartate 37 each coordinate GDP. Position 23 (serine 23) interacts with Mg(2+). Residues 28–46 (RYCKGIFTKDYKKTIGVDF) carry the Switch 1 motif. Tyrosine 38 provides a ligand contact to GTP. Lysine 40 serves as a coordination point for GDP. Position 41 (threonine 41) interacts with GTP. Mg(2+) contacts are provided by threonine 41 and aspartate 64. A Switch 2 motif is present at residues 65–84 (TAGQEEFDAITKAYYRGAQA). Residues glycine 67, asparagine 121, lysine 122, aspartate 124, serine 151, valine 152, and lysine 153 each contribute to the GTP site. Positions 121, 122, and 124 each coordinate GDP. GDP contacts are provided by valine 152 and lysine 153. 2 positions are modified to phosphoserine: serine 186 and serine 187. The segment at 204 to 237 (QNSSSLNGGDVINLRPNKQRTKRTRNPFSSCSVP) is disordered. Position 234 is a cysteine methyl ester (cysteine 234). Cysteine 234 carries the S-geranylgeranyl cysteine lipid modification. A propeptide spans 235–237 (SVP) (removed in mature form).

Belongs to the small GTPase superfamily. Rab family. As to quaternary structure, interacts with SUFU. Mg(2+) is required as a cofactor. As to expression, detected in brain neurons (at protein level). Forebrain and midbrain.

The protein localises to the cell membrane. The protein resides in the cytoplasm. It is found in the endosome membrane. Its subcellular location is the cytoplasmic vesicle. It localises to the autophagosome. The protein localises to the phagosome. The protein resides in the phagosome membrane. The catalysed reaction is GTP + H2O = GDP + phosphate + H(+). Its activity is regulated as follows. Regulated by guanine nucleotide exchange factors (GEFs) which promote the exchange of bound GDP for free GTP. Regulated by GTPase activating proteins (GAPs) which increase the GTP hydrolysis activity. Inhibited by GDP dissociation inhibitors (GDIs). Its function is as follows. The small GTPases Rab are key regulators of intracellular membrane trafficking, from the formation of transport vesicles to their fusion with membranes. Rabs cycle between an inactive GDP-bound form and an active GTP-bound form that is able to recruit to membranes different set of downstream effectors directly responsible for vesicle formation, movement, tethering and fusion. Plays a role in autophagic vacuole assembly, and mediates defense against pathogens, such as S.aureus, by promoting their capture by autophagosomes that then merge with lysosomes. Together with SUFU, prevents nuclear import of GLI1, and thereby inhibits GLI1 transcription factor activity. Regulates GLI1 in differentiating chondrocytes. Likewise, regulates GLI3 proteolytic processing and modulates GLI2 and GLI3 transcription factor activity. The polypeptide is Ras-related protein Rab-23 (Mus musculus (Mouse)).